The primary structure comprises 270 residues: Ribosomal RNA small subunit methyltransferase A (270 aa).

S-adenosyl-L-methionine contacts are provided by asparagine 18, leucine 20, glycine 45, glutamate 66, aspartate 91, and asparagine 112.

The protein belongs to the class I-like SAM-binding methyltransferase superfamily. rRNA adenine N(6)-methyltransferase family. RsmA subfamily.

Its subcellular location is the cytoplasm. It catalyses the reaction adenosine(1518)/adenosine(1519) in 16S rRNA + 4 S-adenosyl-L-methionine = N(6)-dimethyladenosine(1518)/N(6)-dimethyladenosine(1519) in 16S rRNA + 4 S-adenosyl-L-homocysteine + 4 H(+). Functionally, specifically dimethylates two adjacent adenosines (A1518 and A1519) in the loop of a conserved hairpin near the 3'-end of 16S rRNA in the 30S particle. May play a critical role in biogenesis of 30S subunits. The sequence is that of Ribosomal RNA small subunit methyltransferase A from Shewanella piezotolerans (strain WP3 / JCM 13877).